Here is a 178-residue protein sequence, read N- to C-terminus: ATP synthase subunit delta (178 aa).

Belongs to the ATPase delta chain family. In terms of assembly, F-type ATPases have 2 components, F(1) - the catalytic core - and F(0) - the membrane proton channel. F(1) has five subunits: alpha(3), beta(3), gamma(1), delta(1), epsilon(1). F(0) has three main subunits: a(1), b(2) and c(10-14). The alpha and beta chains form an alternating ring which encloses part of the gamma chain. F(1) is attached to F(0) by a central stalk formed by the gamma and epsilon chains, while a peripheral stalk is formed by the delta and b chains.

The protein resides in the cell inner membrane. Functionally, f(1)F(0) ATP synthase produces ATP from ADP in the presence of a proton or sodium gradient. F-type ATPases consist of two structural domains, F(1) containing the extramembraneous catalytic core and F(0) containing the membrane proton channel, linked together by a central stalk and a peripheral stalk. During catalysis, ATP synthesis in the catalytic domain of F(1) is coupled via a rotary mechanism of the central stalk subunits to proton translocation. Its function is as follows. This protein is part of the stalk that links CF(0) to CF(1). It either transmits conformational changes from CF(0) to CF(1) or is implicated in proton conduction. This Pseudomonas putida (strain W619) protein is ATP synthase subunit delta.